A 253-amino-acid polypeptide reads, in one-letter code: Tryptophan synthase alpha chain (253 aa).

Residues Glu47 and Asp58 each act as proton acceptor in the active site.

Belongs to the TrpA family. Tetramer of two alpha and two beta chains.

It catalyses the reaction (1S,2R)-1-C-(indol-3-yl)glycerol 3-phosphate + L-serine = D-glyceraldehyde 3-phosphate + L-tryptophan + H2O. Its pathway is amino-acid biosynthesis; L-tryptophan biosynthesis; L-tryptophan from chorismate: step 5/5. Functionally, the alpha subunit is responsible for the aldol cleavage of indoleglycerol phosphate to indole and glyceraldehyde 3-phosphate. The sequence is that of Tryptophan synthase alpha chain from Lactococcus lactis subsp. cremoris (strain SK11).